A 253-amino-acid chain; its full sequence is tRNA pseudouridine synthase A (253 aa).

Asp-53 (nucleophile) is an active-site residue. Residue Tyr-112 coordinates substrate.

This sequence belongs to the tRNA pseudouridine synthase TruA family. As to quaternary structure, homodimer.

The enzyme catalyses uridine(38/39/40) in tRNA = pseudouridine(38/39/40) in tRNA. Formation of pseudouridine at positions 38, 39 and 40 in the anticodon stem and loop of transfer RNAs. The polypeptide is tRNA pseudouridine synthase A (Lactococcus lactis subsp. cremoris (strain SK11)).